The primary structure comprises 365 residues: Carbohydrate sulfotransferase 10 (365 aa).

Residues 1–6 lie on the Cytoplasmic side of the membrane; that stretch reads MRRHWL. The chain crosses the membrane as a helical; Signal-anchor for type II membrane protein span at residues 7–27; that stretch reads LVGACGWVLLILMFVSKFINF. The Lumenal portion of the chain corresponds to 28 to 356; that stretch reads SFRIPGDYAG…RYQGDFSLFD (329 aa). Residues Asn-99 and Asn-104 are each glycosylated (N-linked (GlcNAc...) asparagine). 3'-phosphoadenylyl sulfate is bound by residues 132–138 and 194–202; these read PKVGNTQ and RDPFERLIS. A glycan (N-linked (GlcNAc...) asparagine) is linked at Asn-325.

This sequence belongs to the sulfotransferase 2 family.

Its subcellular location is the golgi apparatus membrane. In terms of biological role, catalyzes the transfer of sulfate to position 3 of terminal glucuronic acid of both protein- and lipid-linked oligosaccharides. Participates in biosynthesis of HNK-1 carbohydrate structure, a sulfated glucuronyl-lactosaminyl residue carried by many neural recognition molecules. The polypeptide is Carbohydrate sulfotransferase 10 (chst10) (Danio rerio (Zebrafish)).